A 76-amino-acid polypeptide reads, in one-letter code: cAMP-dependent protein kinase inhibitor alpha (76 aa).

N-acetylthreonine is present on threonine 2. A disordered region spans residues 49–76; sequence KTEGEEDAQRNSTEQSGEAQGEAAKSES.

It belongs to the PKI family.

Functionally, extremely potent competitive inhibitor of cAMP-dependent protein kinase activity, this protein interacts with the catalytic subunit of the enzyme after the cAMP-induced dissociation of its regulatory chains. The chain is cAMP-dependent protein kinase inhibitor alpha (PKIA) from Bos taurus (Bovine).